The primary structure comprises 180 residues: Large ribosomal subunit protein uL5 (180 aa).

It belongs to the universal ribosomal protein uL5 family. As to quaternary structure, part of the 50S ribosomal subunit; part of the 5S rRNA/L5/L18/L25 subcomplex. Contacts the 5S rRNA and the P site tRNA. Forms a bridge to the 30S subunit in the 70S ribosome.

Its function is as follows. This is one of the proteins that bind and probably mediate the attachment of the 5S RNA into the large ribosomal subunit, where it forms part of the central protuberance. In the 70S ribosome it contacts protein S13 of the 30S subunit (bridge B1b), connecting the 2 subunits; this bridge is implicated in subunit movement. Contacts the P site tRNA; the 5S rRNA and some of its associated proteins might help stabilize positioning of ribosome-bound tRNAs. The protein is Large ribosomal subunit protein uL5 of Chlamydia abortus (strain DSM 27085 / S26/3) (Chlamydophila abortus).